Consider the following 581-residue polypeptide: Phosphatidylinositol N-acetylglucosaminyltransferase subunit Q (581 aa).

Transmembrane regions (helical) follow at residues 276 to 298 (ANML…WLHS), 344 to 366 (LGRF…SPFI), 381 to 403 (LTVA…YCFY), 446 to 468 (LFIG…LYYL), and 478 to 500 (ITVQ…YSLG).

The protein belongs to the PIGQ family. Component of the glycosylphosphatidylinositol-N-acetylglucosaminyltransferase (GPI-GnT) complex composed at least by PIGA, PIGC, PIGH, PIGP, PIGQ, PIGY and DPM2. Interacts with PIGA, PIGH and PIGC.

The protein localises to the membrane. It participates in glycolipid biosynthesis; glycosylphosphatidylinositol-anchor biosynthesis. Functionally, part of the glycosylphosphatidylinositol-N-acetylglucosaminyltransferase (GPI-GnT) complex that catalyzes the transfer of N-acetylglucosamine from UDP-N-acetylglucosamine to phosphatidylinositol and participates in the first step of GPI biosynthesis. The chain is Phosphatidylinositol N-acetylglucosaminyltransferase subunit Q from Mus musculus (Mouse).